We begin with the raw amino-acid sequence, 351 residues long: Apolipoprotein L4 (351 aa).

The first 21 residues, 1 to 21 (MEGAALLKIFVVCIWVQQNHP), serve as a signal peptide directing secretion.

The protein belongs to the apolipoprotein L family. Widely expressed; the highest levels are in spinal cord, placenta, adrenal gland; also detected in spleen, bone marrow, uterus, trachea, mammary gland and testis; levels are low in brain, heart and pancreas.

It is found in the secreted. Its function is as follows. May play a role in lipid exchange and transport throughout the body. May participate in reverse cholesterol transport from peripheral cells to the liver. The sequence is that of Apolipoprotein L4 (APOL4) from Homo sapiens (Human).